Here is a 528-residue protein sequence, read N- to C-terminus: Capsid scaffolding protein (528 aa).

Active-site charge relay system residues include H46, S116, and H135. An interaction with pAP region spans residues H270–Q288. The tract at residues K394 to A432 is disordered. The short motif at K416–K422 is the Nuclear localization signal element. Residues S508–S528 form an interaction with major capsid protein region.

The protein belongs to the herpesviridae capsid scaffolding protein family. As to quaternary structure, homomultimer. Interacts with major capsid protein. In terms of assembly, exists in a monomer-dimer equilibrium with the dimer being the active species. In terms of processing, capsid scaffolding protein is cleaved by assemblin after formation of the spherical procapsid. As a result, the capsid obtains its mature, icosahedral shape. Cleavages occur at two or more sites: release (R-site) and maturation (M-site).

The protein resides in the host cytoplasm. It localises to the host nucleus. It catalyses the reaction Cleaves -Ala-|-Ser- and -Ala-|-Ala- bonds in the scaffold protein.. Its function is as follows. Acts as a scaffold protein by binding major capsid protein in the cytoplasm, inducing the nuclear localization of both proteins. Multimerizes in the nucleus such as major capsid protein forms the icosahedral T=16 capsid. Autocatalytic cleavage releases the assembly protein, and subsequently abolishes interaction with major capsid protein. Cleavages products are evicted from the capsid before or during DNA packaging. In terms of biological role, protease that plays an essential role in virion assembly within the nucleus. Catalyzes the cleavage of the assembly protein after formation of the spherical procapsid. By that cleavage, the capsid matures and gains its icosahedral shape. The cleavage sites seem to include -Ala-Ser-, -Ala-Ala-, as well as Ala-Thr bonds. Assemblin and cleavages products are evicted from the capsid before or during DNA packaging. Functionally, plays a major role in capsid assembly. Acts as a scaffold protein by binding major capsid protein. Multimerizes in the nucleus such as major capsid protein forms the icosahedral T=16 capsid. Cleaved by assemblin after capsid completion. The cleavages products are evicted from the capsid before or during DNA packaging. In Homo sapiens (Human), this protein is Capsid scaffolding protein (U53).